A 234-amino-acid chain; its full sequence is Orotidine 5'-phosphate decarboxylase (234 aa).

Substrate contacts are provided by residues Asp14, Lys36, 63–72 (DMKLLDIDNT), Thr118, Arg179, Gln188, Gly208, and Arg209. Lys65 acts as the Proton donor in catalysis.

It belongs to the OMP decarboxylase family. Type 1 subfamily. In terms of assembly, homodimer.

The catalysed reaction is orotidine 5'-phosphate + H(+) = UMP + CO2. It participates in pyrimidine metabolism; UMP biosynthesis via de novo pathway; UMP from orotate: step 2/2. Functionally, catalyzes the decarboxylation of orotidine 5'-monophosphate (OMP) to uridine 5'-monophosphate (UMP). In Rhizobium meliloti (strain 1021) (Ensifer meliloti), this protein is Orotidine 5'-phosphate decarboxylase.